Consider the following 757-residue polypeptide: Dolichyl-diphosphooligosaccharide--protein glycosyltransferase subunit stt-3 (757 aa).

Residues 1–13 are Cytoplasmic-facing; the sequence is MTSTTAARTASSR. The chain crosses the membrane as a helical span at residues 14-34; sequence VGATTLLTIVVLALAWFVGFA. Over 35–121 the chain is Lumenal; it reads SRLFAIVRFE…VHIREVCVFL (87 aa). The DXD motif 1 signature appears at 49–51; it reads EFD. Asp51 is a Mn(2+) binding site. The chain crosses the membrane as a helical span at residues 122–140; the sequence is APTFSGLTAIATYLLTKEL. Residues 141–142 lie on the Cytoplasmic side of the membrane; sequence WS. A helical membrane pass occupies residues 143 to 160; the sequence is PGAGLFAACFIAISPGYT. Residues 161–171 are Lumenal-facing; that stretch reads SRSVAGSYDNE. Residues Asp169 and Glu171 each contribute to the Mn(2+) site. A DXD motif 2 motif is present at residues 169-171; sequence DNE. The chain crosses the membrane as a helical span at residues 172–191; it reads GIAIFALQFTYYLWVKSLKT. The Cytoplasmic segment spans residues 192 to 193; sequence GS. Residues 194 to 208 form a helical membrane-spanning segment; it reads IMWASLCALSYFYMV. Residues 209-210 are Lumenal-facing; that stretch reads SA. The next 2 helical transmembrane spans lie at 211 to 235 and 236 to 261; these read WGGYVFIINLIPLHALALIIMGRYS and SRLFVSYTSFYCLATILSMQVPFVGF. The Lumenal segment spans residues 262–269; that stretch reads QPVRTSEH. A helical transmembrane segment spans residues 270–289; it reads MPAFGVFGLLQIVALMHYAR. Over 290–299 the chain is Cytoplasmic; that stretch reads NRITRQQFMT. A helical membrane pass occupies residues 300-320; the sequence is LFVGGLTILGALSVVVYFALV. Topologically, residues 321 to 358 are lumenal; that stretch reads WGGYVAPFSGRFYSLWDTGYAKIHIPIIASVSEHQPTT. The short motif at 350 to 353 is the SVSE motif element; the sequence is SVSE. Residues 359-381 traverse the membrane as a helical segment; that stretch reads WVSFFFDLHITAAVFPVGLWYCI. At 382-387 the chain is on the cytoplasmic side; that stretch reads KKVNDE. A helical transmembrane segment spans residues 388–404; the sequence is RVFIILYAVSAVYFAGV. At 405 to 408 the chain is on the lumenal side; it reads MVRL. Residue Arg407 participates in dolichyl diphosphooligosaccharide binding. Residues 409 to 430 form a helical membrane-spanning segment; sequence MLTLTPAVCVLAGIGFSYTFEK. Over 431–469 the chain is Cytoplasmic; it reads YLKDEETKERSSSQSGTTKDEKLYDKAAKNVKSRNANDG. The chain crosses the membrane as a helical span at residues 470 to 495; that stretch reads DESGVSSNVRTIISIILVIFLLMFVV. Residues 496-757 lie on the Lumenal side of the membrane; the sequence is HATYVTSNAY…IRPAPTASKA (262 aa). The interval 547–549 is interacts with target acceptor peptide in protein substrate; that stretch reads WWD. The short motif at 547–551 is the WWDYG motif element; that stretch reads WWDYG. Tyr552 serves as a coordination point for dolichyl diphosphooligosaccharide. N-linked (GlcNAc...) asparagine glycans are attached at residues Asn559 and Asn566. Asn570 carries N-linked (GlcNAc...) (high mannose) asparagine glycosylation. An N-linked (GlcNAc...) asparagine glycan is attached at Asn584. Positions 614–621 match the DK motif motif; the sequence is DINKFLWM. Residues 721-757 are disordered; that stretch reads RPTVKSEEATIPIKGKKATQGKNKKGVIRPAPTASKA. The segment covering 734–747 has biased composition (basic residues); it reads KGKKATQGKNKKGV.

Belongs to the STT3 family. Component of the oligosaccharyltransferase (OST) complex. It depends on Mg(2+) as a cofactor. Mn(2+) is required as a cofactor.

The protein localises to the endoplasmic reticulum membrane. It carries out the reaction a di-trans,poly-cis-dolichyl diphosphooligosaccharide + L-asparaginyl-[protein] = N(4)-(oligosaccharide-(1-&gt;4)-N-acetyl-beta-D-glucosaminyl-(1-&gt;4)-N-acetyl-beta-D-glucosaminyl)-L-asparaginyl-[protein] + a di-trans,poly-cis-dolichyl diphosphate + H(+). Its pathway is protein modification; protein glycosylation. Its function is as follows. Catalytic subunit of the oligosaccharyl transferase (OST) complex that catalyzes the initial transfer of a defined glycan (Glc(3)Man(9)GlcNAc(2) in eukaryotes) from the lipid carrier dolichol-pyrophosphate to an asparagine residue within an Asn-X-Ser/Thr consensus motif in nascent polypeptide chains, the first step in protein N-glycosylation. N-glycosylation occurs cotranslationally and the complex associates with the Sec61 complex at the channel-forming translocon complex that mediates protein translocation across the endoplasmic reticulum (ER). All subunits are required for a maximal enzyme activity. This subunit contains the active site and the acceptor peptide and donor lipid-linked oligosaccharide (LLO) binding pockets. The sequence is that of Dolichyl-diphosphooligosaccharide--protein glycosyltransferase subunit stt-3 from Caenorhabditis elegans.